Reading from the N-terminus, the 154-residue chain is Transcriptional repressor NrdR (154 aa).

A zinc finger spans residues Cys3 to Cys34. One can recognise an ATP-cone domain in the interval Pro49–Glu139.

It belongs to the NrdR family. Requires Zn(2+) as cofactor.

Its function is as follows. Negatively regulates transcription of bacterial ribonucleotide reductase nrd genes and operons by binding to NrdR-boxes. This Pseudomonas savastanoi pv. phaseolicola (strain 1448A / Race 6) (Pseudomonas syringae pv. phaseolicola (strain 1448A / Race 6)) protein is Transcriptional repressor NrdR.